The primary structure comprises 2415 residues: MEGASTQPMPHSQRERQAPVHAISGTWENCDQAGEYKGTACCVVERQVYSTETHAVEGCCSTRWNGVKEEKGGGEVSSRTALAGVVHLYTNSDGNAYTHISDQGMRQDEAVAGQEQRHLNCEGEHEKKGNVAAGGGTLMVTKSEIEPCDDYYSVQRGQSCAGERAPRDGCCRLLDGSRVDPAEGGSEEDENCYTHVLQKHLGQMPTAPYQGDDRLQTDLRLGDFQSGPSDALSGHHVTRTPILSPHGRYSEYISERLAWQYAERPGHGIAAENTVVMHSHTGEATGSLRADAPSQWSTESRLQFHVGSQFTTENPELFAGIVGLDTEQFDARNAEALHWRQQGEARSTETECIADITPERGNRSTIRQWNKPEAARQEYHRASASARGPEETNIITRGAHSDDQSIDAAAPGCWAARHLTSRQHPNPRPRMKEEHCGREREVLSSEQPSDCGETQKTPASHSLVLDSKSRADASQTSPYTRNDEIQTIRAFEEQCLEVQLPQSRLRRGIDYEAGMSQLAPTTQELKAKVLTTGLSPSCPNAAVLRASVPLSMDTTVTVHLADVEDPSSKRHTPIENSISSGHCDPPCSSPGGMMEPRVSVSGLGSPHNCVEDREIARHGDGIGRDILERRPLPFSPAALLTGCSSTAASSVVSGDVFTSVAASARANACRSSTDTQEESGCGDAPRYVLLFPDEQDERLGHAQTSIATPSGSGQSKCMFKGDGNAEATFREEVKSSELRTPSRIQTRRLLPGVQLQGMDCDGCGASDPQKGRPAPETGFLPEICHFSPQHPWQPGSEVNQGYRAGADYGTSRVQQSLENCSWEESVDEGEQPRTTSSSSYGQDTQKRDSFLQSIDNRIASEPVDPTGTCGYNSTPETFRSGCIMRDQMLGVKPHLSHVSLTREGKHRGQQTHLRKTGVPTWSAEEDASLAELVSRKGFKWALISSQLTGAFGIPRTGKQCRERWFNHVNPEVKKGDWSAEEDAMILMLQNELGNRWATIAKKLRGRTENAVKNRFISLSNARLGYGRPKRDGSSADCFSNRRTGSGKSSGITGMPNLCQSVCSAGTTKKDSSESGNHFVMSVATKVFEFSDVAVDSGVSRPRQCTGTSPSCGHPSAGEGDPSHLKNTDVVGREQPIQRNNNESGKAAEQTAFSGVKTGTLSVSQDAVPVGRLVVASVGPQHIRRSFPTDETLPKFAAKEHNNQQLNDEREHLEQSNSTSEGSFLASAHEHADIARSDPDEDTLEPHQKRRRKRCAIAYQGEERGDSNGLDSIADRAEQAGNFQAMRKANTDNGKVDYLEPHRYEKLSPCEQVIQPSLRPACDHRGAPQNSVESGEQSPDAQRQLCNQGCRTSNRTVHSSVYSNEVESNELRGVFRLAEQSLPSQSGDPAWSTAGFQLSILPQKVEVHSRNKCDGQNVMYRCSPGSLPTTHQQTVFHYDRDSSRFPCAAKPAAASGAQGTIEENDGLVKEGPSMIVTGSSVEVVHCCSVSLRRRDRSLPSAQLWTSQETESDTNPSPNQQHESCHQYCKRHAAWCGKTDQFSKLTSSHQENSSGKDACLVSVSPTVTLDDLQKQSRGTVLSAKEEIGKPETWSHVVDNTYSKTDHQRASLCAENSSGCAEGSTELVRFSGGSVKSGSSMSVDCGNGNPDDCQDCKAEEIWRGEQRYAERGHSVESRGAGSVGRSTDLTITDSGSMPLCASPIGRPPADNDTLFLSDARCNVVAQLNHQDNSRISRLASCEEEFLACGGERLINASGGFKPDGGCLYRMQQAGACNTKLHRPVHSCSTIDSEQLEDLPSVEKAVGDRSFSSKRKGDIPPFAEWKKNDELRELYRGVSEAVSHGQPGDWNGSWPGISGRAHQTSSCFPDRVNASDRRELNSWRLHVSAAAELGSSHIWNSQSYASASVSRDKQREPPKNGLTGCDVPEYLGTSQSAGLPAANAHERGNFYGHDRCRPREGERVRWVGLQRNRKPEASVSSGASNSATTARPKDSTEPDEGNSEGVSTRRKDSGSTAATISRAVSLGMVTPSAACENSSSLTDTSPPLSHRPSFSFTHCCEETLSRCNSSNYLCPPATCHTSDDGRSLGPSREAQALRSLSLASGYGYPGIPAEATSFWQGSSLEHSIMEPQMVPSDDELRLWVHPRDAANWSQSTLKPVAVVSGTDAGDDQHKTPENLTPESGQAHRRDGHDMQRVQRCDDEGECPPTTVELTFPHSHSSDEMQDLPSKVQGNFLLRRELSDSLQHETAESVAGYGWMRIRNAGDIPNSKVPCAWEQCMPASERERGVNDHMSSEASRMSKAASSSFVPSSCTDAPVVRVGEDTTKSVCEEQQLCEGGNRGSLSPEATGFESLGPPLQLLLVDGYTPFEPVVEKVSQTMEQTLFPVPGQETDTRDEDGRYNCECLQNRQPPLHSGGLM.

Disordered stretches follow at residues 369 to 392 (WNKP…PEET), 418 to 481 (HLTS…PYTR), and 761 to 845 (DGCG…QDTQ). Positions 419 to 429 (LTSRQHPNPRP) are enriched in basic residues. A compositionally biased stretch (basic and acidic residues) spans 430 to 443 (RMKEEHCGREREVL). Polar residues-rich tracts occupy residues 444 to 460 (SSEQ…TPAS) and 832 to 843 (PRTTSSSSYGQD). In terms of domain architecture, Myb-like spans 921 to 968 (WSAEEDASLAELVSRKGFKWALISSQLTGAFGIPRTGKQCRERWFNHV). Residues 969 to 1023 (NPEVKKGDWSAEEDAMILMLQNELGNRWATIAKKLRGRTENAVKNRFISLSNARL) enclose the HTH myb-type domain. Positions 996–1019 (WATIAKKLRGRTENAVKNRFISLS) form a DNA-binding region, H-T-H motif. 8 disordered regions span residues 1027-1050 (RPKR…KSSG), 1098-1127 (VSRP…LKNT), 1206-1270 (NDER…NGLD), 1319-1343 (PACD…AQRQ), 1501-1521 (QLWT…QQHE), 1905-1932 (VSRD…TSQS), 1959-2013 (RVRW…GSTA), and 2161-2222 (GTDA…EMQD). Over residues 1036-1050 (DCFSNRRTGSGKSSG) the composition is skewed to polar residues. Over residues 1227-1237 (AHEHADIARSD) the composition is skewed to basic and acidic residues. 2 stretches are compositionally biased toward polar residues: residues 1327–1343 (PQNS…AQRQ) and 1501–1520 (QLWT…NQQH). Residues 1974-1985 (SVSSGASNSATT) show a composition bias toward polar residues. The segment covering 2181 to 2197 (QAHRRDGHDMQRVQRCD) has biased composition (basic and acidic residues).

The protein resides in the nucleus. Its function is as follows. Master transcription factor that controls the differentiation of acute-stage tachyzoite parasites into chronic-stage bradyzoites, which form intracellular cysts resistant to immune clearance and existing therapies. Sufficient to drive differentiation into bradyzoite stage. Following translation in response to stress conditions, binds to the promoter of many chronic stage-specific genes and promotes their expression, thereby driving differentiation into bradyzoites. The chain is Bradyzoite-formation deficient protein 1 from Toxoplasma gondii (strain ATCC 50611 / Me49).